We begin with the raw amino-acid sequence, 253 residues long: uncharacterized protein (253 aa).

Positions 1-25 are cleaved as a signal peptide; it reads MRKKKFLSKVSFGSLFLLCGTVLSA. A lipid anchor (N-palmitoyl cysteine) is attached at Cys-26. Cys-26 is lipidated: S-diacylglycerol cysteine.

It belongs to the MG439/MG440 family.

It localises to the cell membrane. This is an uncharacterized protein from Mycoplasma pneumoniae (strain ATCC 29342 / M129 / Subtype 1) (Mycoplasmoides pneumoniae).